The chain runs to 260 residues: Acetylglutamate kinase (260 aa).

Residues 46-47 (GG), arginine 68, and asparagine 160 contribute to the substrate site.

This sequence belongs to the acetylglutamate kinase family. ArgB subfamily.

It is found in the cytoplasm. It carries out the reaction N-acetyl-L-glutamate + ATP = N-acetyl-L-glutamyl 5-phosphate + ADP. Its pathway is amino-acid biosynthesis; L-arginine biosynthesis; N(2)-acetyl-L-ornithine from L-glutamate: step 2/4. Catalyzes the ATP-dependent phosphorylation of N-acetyl-L-glutamate. The polypeptide is Acetylglutamate kinase (Shewanella sp. (strain W3-18-1)).